The primary structure comprises 239 residues: UDP-2,3-diacylglucosamine hydrolase (239 aa).

The Mn(2+) site is built by Asp8, His10, Asp41, Asn79, and His114. 79–80 (NR) is a substrate binding site. Residues Asp122, Ser160, Asn164, Lys167, and His195 each coordinate substrate. Mn(2+) contacts are provided by His195 and His197.

It belongs to the LpxH family. Mn(2+) serves as cofactor.

The protein resides in the cell inner membrane. It carries out the reaction UDP-2-N,3-O-bis[(3R)-3-hydroxytetradecanoyl]-alpha-D-glucosamine + H2O = 2-N,3-O-bis[(3R)-3-hydroxytetradecanoyl]-alpha-D-glucosaminyl 1-phosphate + UMP + 2 H(+). The protein operates within glycolipid biosynthesis; lipid IV(A) biosynthesis; lipid IV(A) from (3R)-3-hydroxytetradecanoyl-[acyl-carrier-protein] and UDP-N-acetyl-alpha-D-glucosamine: step 4/6. Hydrolyzes the pyrophosphate bond of UDP-2,3-diacylglucosamine to yield 2,3-diacylglucosamine 1-phosphate (lipid X) and UMP by catalyzing the attack of water at the alpha-P atom. Involved in the biosynthesis of lipid A, a phosphorylated glycolipid that anchors the lipopolysaccharide to the outer membrane of the cell. This chain is UDP-2,3-diacylglucosamine hydrolase, found in Sodalis glossinidius (strain morsitans).